The following is a 245-amino-acid chain: Type II restriction enzyme EcoRV (245 aa).

The Mg(2+) site is built by E45, D74, and D90. Residues D74, D90, and K92 contribute to the active site.

Homodimer. Mg(2+) is required as a cofactor.

It carries out the reaction Endonucleolytic cleavage of DNA to give specific double-stranded fragments with terminal 5'-phosphates.. Its function is as follows. A P subtype restriction enzyme that recognizes the double-stranded sequence 5'-GATATC-3' and cleaves after T-3. This chain is Type II restriction enzyme EcoRV (ecoRVR), found in Escherichia coli.